The primary structure comprises 113 residues: 4-cresol dehydrogenase [hydroxylating] cytochrome c subunit (113 aa).

A signal peptide spans 1–33 (MTFPFSGAAVKRMLVTGVVLPFGLLVAAGQAQA). Heme c contacts are provided by C48, C51, H52, and M83.

Tetramer of two cytochrome subunits and two flavoprotein subunits. Binds 1 heme c group covalently per subunit.

The protein operates within aromatic compound metabolism; p-cresol degradation. Its function is as follows. This is the heme-containing component of the p-cresol methylhydroxylase. It accepts electrons from the flavoprotein subunit. The chain is 4-cresol dehydrogenase [hydroxylating] cytochrome c subunit (pchC) from Pseudomonas putida (Arthrobacter siderocapsulatus).